Reading from the N-terminus, the 385-residue chain is Phosphotransferase FrzJ (385 aa).

Residues Asn38 and Lys59 each contribute to the ATP site. Residue Asp245 is part of the active site.

Belongs to the methylthioribose kinase family. As to quaternary structure, monomer.

It catalyses the reaction (1S,3S,6S,7S,8S,9S)-6-[(4-methoxyphenyl)methyl]-3-(methylamino)-5-azatricyclo[6.3.1.0(1,5)]dodecane-7,9-diol + ATP = (-)-FR901483 + ADP + 2 H(+). The protein operates within secondary metabolite biosynthesis. Its function is as follows. Phosphotransferase; part of the gene cluster that mediates the biosynthesis of the alkaloid (-)-FR901483, a potent immunosuppressant that shows efficacy in animal models and a probable inhibitor of purine nucleotide biosynthesis by targeting phosphoribosylpyrophosphate amidotransferase (PPAT). FrzJ catalyzes the last step of the pathway by phosphorylating the C4'-OH of dephospho-(-)-FR901483 to produce (-)-FR901483. The biosynthesis of (-)-FR901483 starts with the condensation of two L-tyrosines to yield (S,S)-dityrosyl-piperazine. This process occurs in 3 steps with the non-canonical nonribosomal peptide synthetase FrzA catalyzing the reduction of L-tyrosine into L-tyrosinal, the spontaneous condensation of 2 L-tyrosinal units, and the subsequent reduction by the NmrA-like family domain-containing oxidoreductase FrzB. The cytochrome P450 monooxygenase FrzC then performs coupling between N10 and C1' to morph the piperazine into a 1,4-diazabicyclo[3.2.1]octane spiro-fused to a 2,5-cyclohexadienone. The dienone portion is further reduced to cyclohexanone by the flavin-dependent reductase FrzD. The methyltranserases (MTs) FrzE and FrzF are then involved in the methylation at the C10' amine and the C4 phenolic oxygen, respectively. The order of the two MTs appear to be interchangeable. Cleavage of the C9-N10' bond by the dioxygenase FrzG then leads to formation of a conjugated iminium. In addition to the oxidation of C9, an additional dehydrogenation between C7 and C8 can occur to give a likely shunt product. The next biosynthetic step is the intramolecular aldol condensation catalyzed by the newly identified aldolase FrzH to yield an aza-tricyclic product with the formation of a C9-C3' bond. The short-chain dehydrogenase/reductase FrzI then produces dephospho-(-)-FR901483 that is phosphorylated at C4'-OH into (-)-FR901483 by the phosphotransferase FrzJ. The polypeptide is Phosphotransferase FrzJ (Cladobotryum sp).